The chain runs to 180 residues: NADH-quinone oxidoreductase subunit I (180 aa).

2 consecutive 4Fe-4S ferredoxin-type domains span residues I48–A80 and E90–D119. Residues C60, C63, C66, C70, C99, C102, C105, and C109 each coordinate [4Fe-4S] cluster.

It belongs to the complex I 23 kDa subunit family. As to quaternary structure, NDH-1 is composed of 13 different subunits. Subunits NuoA, H, J, K, L, M, N constitute the membrane sector of the complex. [4Fe-4S] cluster is required as a cofactor.

It localises to the cell inner membrane. It catalyses the reaction a quinone + NADH + 5 H(+)(in) = a quinol + NAD(+) + 4 H(+)(out). Its function is as follows. NDH-1 shuttles electrons from NADH, via FMN and iron-sulfur (Fe-S) centers, to quinones in the respiratory chain. The immediate electron acceptor for the enzyme in this species is believed to be ubiquinone. Couples the redox reaction to proton translocation (for every two electrons transferred, four hydrogen ions are translocated across the cytoplasmic membrane), and thus conserves the redox energy in a proton gradient. The protein is NADH-quinone oxidoreductase subunit I of Erwinia tasmaniensis (strain DSM 17950 / CFBP 7177 / CIP 109463 / NCPPB 4357 / Et1/99).